Consider the following 258-residue polypeptide: Acetylglutamate kinase (258 aa).

Substrate-binding positions include 44–45 (GG), arginine 66, and asparagine 158. ATP is bound by residues 181–186 (DISSIL) and 209–211 (IIT).

Belongs to the acetylglutamate kinase family. ArgB subfamily. As to quaternary structure, homodimer.

The protein localises to the cytoplasm. It carries out the reaction N-acetyl-L-glutamate + ATP = N-acetyl-L-glutamyl 5-phosphate + ADP. It participates in amino-acid biosynthesis; L-arginine biosynthesis; N(2)-acetyl-L-ornithine from L-glutamate: step 2/4. Functionally, catalyzes the ATP-dependent phosphorylation of N-acetyl-L-glutamate. The chain is Acetylglutamate kinase from Buchnera aphidicola subsp. Schizaphis graminum (strain Sg).